We begin with the raw amino-acid sequence, 349 residues long: S-adenosylmethionine:tRNA ribosyltransferase-isomerase (349 aa).

It belongs to the QueA family. Monomer.

The protein localises to the cytoplasm. It carries out the reaction 7-aminomethyl-7-carbaguanosine(34) in tRNA + S-adenosyl-L-methionine = epoxyqueuosine(34) in tRNA + adenine + L-methionine + 2 H(+). It functions in the pathway tRNA modification; tRNA-queuosine biosynthesis. In terms of biological role, transfers and isomerizes the ribose moiety from AdoMet to the 7-aminomethyl group of 7-deazaguanine (preQ1-tRNA) to give epoxyqueuosine (oQ-tRNA). In Ruegeria sp. (strain TM1040) (Silicibacter sp.), this protein is S-adenosylmethionine:tRNA ribosyltransferase-isomerase.